Here is a 161-residue protein sequence, read N- to C-terminus: Peptidyl-prolyl cis-trans isomerase (161 aa).

The 155-residue stretch at 6-160 folds into the PPIase cyclophilin-type domain; the sequence is FFDIKAGDER…KKIIIEDCGE (155 aa).

Belongs to the cyclophilin-type PPIase family. PPIase A subfamily. Found mainly in the tegument, gut epithelium, and muscle layers. Also found in the interior of the parasite.

It carries out the reaction [protein]-peptidylproline (omega=180) = [protein]-peptidylproline (omega=0). Its activity is regulated as follows. Binds cyclosporin A (CsA). CsA mediates some of its effects via an inhibitory action on PPIase. PPIases accelerate the folding of proteins. It catalyzes the cis-trans isomerization of proline imidic peptide bonds in oligopeptides. This is Peptidyl-prolyl cis-trans isomerase from Schistosoma mansoni (Blood fluke).